Here is a 255-residue protein sequence, read N- to C-terminus: Probable transcriptional regulator ycf27 (255 aa).

The Response regulatory domain occupies 9-122 (KILIADDESS…ELEARIRCVL (114 aa)). Position 58 is a 4-aspartylphosphate (D58). Residues 78-96 (DIPIIMLTALGDVTDRITG) constitute a DNA-binding region (H-T-H motif). The ompR/PhoB-type DNA-binding region spans 137-238 (SGIINIGFLK…SRGTGYLFQR (102 aa)).

Its subcellular location is the plastid. The protein localises to the chloroplast. Its function is as follows. Probable promoter-specific protein mediating the interaction between DNA and RNA polymerase. The polypeptide is Probable transcriptional regulator ycf27 (ycf27) (Galdieria sulphuraria (Red alga)).